The following is a 68-amino-acid chain: Large ribosomal subunit protein bL35 (68 aa).

The protein belongs to the bacterial ribosomal protein bL35 family.

This Persephonella marina (strain DSM 14350 / EX-H1) protein is Large ribosomal subunit protein bL35.